A 554-amino-acid chain; its full sequence is Formate--tetrahydrofolate ligase (554 aa).

65–72 contacts ATP; sequence TPAGEGKT.

This sequence belongs to the formate--tetrahydrofolate ligase family.

The enzyme catalyses (6S)-5,6,7,8-tetrahydrofolate + formate + ATP = (6R)-10-formyltetrahydrofolate + ADP + phosphate. Its pathway is one-carbon metabolism; tetrahydrofolate interconversion. This is Formate--tetrahydrofolate ligase from Petrotoga mobilis (strain DSM 10674 / SJ95).